A 273-amino-acid chain; its full sequence is Ribosomal RNA small subunit methyltransferase I (273 aa).

This sequence belongs to the methyltransferase superfamily. RsmI family.

The protein resides in the cytoplasm. It carries out the reaction cytidine(1402) in 16S rRNA + S-adenosyl-L-methionine = 2'-O-methylcytidine(1402) in 16S rRNA + S-adenosyl-L-homocysteine + H(+). In terms of biological role, catalyzes the 2'-O-methylation of the ribose of cytidine 1402 (C1402) in 16S rRNA. The sequence is that of Ribosomal RNA small subunit methyltransferase I from Xylella fastidiosa (strain Temecula1 / ATCC 700964).